The following is a 221-amino-acid chain: 7-cyano-7-deazaguanine synthase (221 aa).

10–20 lines the ATP pocket; the sequence is FSGGQDSTTCL. The Zn(2+) site is built by Cys186, Cys195, Cys198, and Cys201.

The protein belongs to the QueC family. As to quaternary structure, homodimer. Requires Zn(2+) as cofactor.

It carries out the reaction 7-carboxy-7-deazaguanine + NH4(+) + ATP = 7-cyano-7-deazaguanine + ADP + phosphate + H2O + H(+). It participates in purine metabolism; 7-cyano-7-deazaguanine biosynthesis. Catalyzes the ATP-dependent conversion of 7-carboxy-7-deazaguanine (CDG) to 7-cyano-7-deazaguanine (preQ(0)). The protein is 7-cyano-7-deazaguanine synthase of Anoxybacillus flavithermus (strain DSM 21510 / WK1).